Here is an 89-residue protein sequence, read N- to C-terminus: MSLSVEAKAKIVADFGRGTNDSGSTEVQVALLTAQINHLQGHFSEHKKDHHSRRGLLRMVSQRRKLLDYLKRKDVARYTSLIARLGLRR.

Belongs to the universal ribosomal protein uS15 family. As to quaternary structure, part of the 30S ribosomal subunit. Forms a bridge to the 50S subunit in the 70S ribosome, contacting the 23S rRNA.

Functionally, one of the primary rRNA binding proteins, it binds directly to 16S rRNA where it helps nucleate assembly of the platform of the 30S subunit by binding and bridging several RNA helices of the 16S rRNA. Its function is as follows. Forms an intersubunit bridge (bridge B4) with the 23S rRNA of the 50S subunit in the ribosome. The sequence is that of Small ribosomal subunit protein uS15 from Pectobacterium atrosepticum (strain SCRI 1043 / ATCC BAA-672) (Erwinia carotovora subsp. atroseptica).